A 496-amino-acid chain; its full sequence is Protein TOO MANY MOUTHS (496 aa).

A signal peptide spans 1–23 (MARYEFFRQIFIVLSIVSPLVRS). Over 24 to 473 (FTVITSDSTA…ATDVSSTSKS (450 aa)) the chain is Extracellular. 10 LRR repeats span residues 158-182 (GSSL…LGNL), 183-208 (TNLK…RFSG), 210-228 (RSLD…GFVL), 229-252 (PALS…LTSC), 254-276 (SLIK…INRL), 277-300 (NQLV…LQGL), 302-325 (SLQA…AFKG), 326-350 (LKNL…LTRL), 351-373 (NSLR…EFRD), and 375-401 (KHLS…VWRM). 2 N-linked (GlcNAc...) asparagine glycosylation sites follow: Asn-181 and Asn-196. A glycan (N-linked (GlcNAc...) asparagine) is linked at Asn-362. Positions 438-464 (AETSRPAPSGTVQHLSREEDGALPDGA) are disordered. A helical membrane pass occupies residues 474–494 (LGFSYLSAFFLVFPNFIFMLI). The Cytoplasmic portion of the chain corresponds to 495–496 (SS).

This sequence belongs to the RLP family. As to quaternary structure, forms heterodimer with ERECTA or ERL1 through their extracellular domains. Not able to form homodimer. Interacts with EPF2 but not with EPF1. Interacts with SERK1, SERK2, SERK3/BAK1 and SERK4. Interacts with EPFL9/STOMAGEN. In terms of tissue distribution, in epidermal cells of developing shoots and leaves, but not in roots. Expressed in the stomatal cell lineage in the developing epidermis. Accumulates strongly in meristemoid mother cells (MMC) and meristemoids, somewhat less in meristemoid sister cells (stomatal-lineage ground cells, SLGC), and is barely detected in pavement cells.

The protein resides in the cell membrane. Functionally, promotes cell fate progression in stomatal development. In leaves, needed to correctly orient spacing divisions, to limit the number of asymmetric divisions in neighbor cells, and to promote the asymmetric (amplifying) divisions of meristemoids. In stems, promotes the conversion of meristemoids into guard mother cells (GMC). Positively regulates CAPRICE (CPC) expression in differentiating stomaless-forming cell files. Forms constitutive complexes with ERECTA and ERL1 involved in the recognition of the stomatal regulatory peptides EPF1, EPF2 and EPFL9/STOMAGEN. Modulates the activity of the ligand-receptor pairs EPF2-ERECTA and EPF1-ERL1 in stomatal development. Functions in a combinatorial specific manner with the ERECTA-family (ERf) receptor kinases in the regulation of the immune response. The polypeptide is Protein TOO MANY MOUTHS (Arabidopsis thaliana (Mouse-ear cress)).